The primary structure comprises 240 residues: Orotidine 5'-phosphate decarboxylase (240 aa).

Residues Asp-12, Lys-34, 62 to 71 (DMKLFDIGNT), Thr-117, Arg-180, Gln-189, Gly-209, and Arg-210 each bind substrate. Lys-64 (proton donor) is an active-site residue.

It belongs to the OMP decarboxylase family. Type 1 subfamily. As to quaternary structure, homodimer.

It carries out the reaction orotidine 5'-phosphate + H(+) = UMP + CO2. It participates in pyrimidine metabolism; UMP biosynthesis via de novo pathway; UMP from orotate: step 2/2. Functionally, catalyzes the decarboxylation of orotidine 5'-monophosphate (OMP) to uridine 5'-monophosphate (UMP). The sequence is that of Orotidine 5'-phosphate decarboxylase from Ruegeria pomeroyi (strain ATCC 700808 / DSM 15171 / DSS-3) (Silicibacter pomeroyi).